The chain runs to 229 residues: Clathrin light chain B (229 aa).

A compositionally biased stretch (low complexity) spans 1-17 (MADDFGFFSSSESGAPE). The disordered stretch occupies residues 1 to 82 (MADDFGFFSS…NGDVFQEANG (82 aa)). Phosphoserine is present on residues S11 and S13. Residues 58–73 (GPTSGAGSEDMGTTVN) show a composition bias toward polar residues. Residues 93–155 (ADRLTQEPES…QVEKNKINNR (63 aa)) are involved in binding clathrin heavy chain. T187 is modified (phosphothreonine). Residues C199 and C209 are joined by a disulfide bond. K204 is subject to N6-acetyllysine. At S217 the chain carries Phosphoserine.

This sequence belongs to the clathrin light chain family. As to quaternary structure, clathrin coats are formed from molecules containing 3 heavy chains and 3 light chains. Interacts (via N-terminus) with HIP1. Interacts with HIP1R.

It is found in the cytoplasmic vesicle membrane. The protein localises to the membrane. It localises to the coated pit. Functionally, clathrin is the major protein of the polyhedral coat of coated pits and vesicles. The protein is Clathrin light chain B (CLTB) of Homo sapiens (Human).